The following is a 225-amino-acid chain: Glycerol-3-phosphate acyltransferase (225 aa).

A run of 6 helical transmembrane segments spans residues Phe6 to Gly26, Trp55 to Leu75, Asp95 to Asn115, Pro135 to Ala155, Ile160 to Thr180, and Ile187 to Ile207.

This sequence belongs to the PlsY family. In terms of assembly, probably interacts with PlsX.

It localises to the cell membrane. It carries out the reaction an acyl phosphate + sn-glycerol 3-phosphate = a 1-acyl-sn-glycero-3-phosphate + phosphate. It functions in the pathway lipid metabolism; phospholipid metabolism. Its function is as follows. Catalyzes the transfer of an acyl group from acyl-phosphate (acyl-PO(4)) to glycerol-3-phosphate (G3P) to form lysophosphatidic acid (LPA). This enzyme utilizes acyl-phosphate as fatty acyl donor, but not acyl-CoA or acyl-ACP. This Phytoplasma australiense protein is Glycerol-3-phosphate acyltransferase.